The chain runs to 245 residues: 5-oxoprolinase subunit A (245 aa).

It belongs to the LamB/PxpA family. Forms a complex composed of PxpA, PxpB and PxpC.

The catalysed reaction is 5-oxo-L-proline + ATP + 2 H2O = L-glutamate + ADP + phosphate + H(+). Functionally, catalyzes the cleavage of 5-oxoproline to form L-glutamate coupled to the hydrolysis of ATP to ADP and inorganic phosphate. The protein is 5-oxoprolinase subunit A of Haemophilus influenzae (strain 86-028NP).